The primary structure comprises 267 residues: Thymidylate synthase (267 aa).

Arginine 25 is a dUMP binding site. Histidine 55 is a binding site for (6R)-5,10-methylene-5,6,7,8-tetrahydrofolate. Residue 130–131 coordinates dUMP; sequence RR. The active-site Nucleophile is the cysteine 150. DUMP contacts are provided by residues 170 to 173, asparagine 181, and 211 to 213; these read RSAD and HIY. Aspartate 173 lines the (6R)-5,10-methylene-5,6,7,8-tetrahydrofolate pocket. Alanine 266 contributes to the (6R)-5,10-methylene-5,6,7,8-tetrahydrofolate binding site.

Belongs to the thymidylate synthase family. Bacterial-type ThyA subfamily. As to quaternary structure, homodimer.

Its subcellular location is the cytoplasm. The enzyme catalyses dUMP + (6R)-5,10-methylene-5,6,7,8-tetrahydrofolate = 7,8-dihydrofolate + dTMP. It participates in pyrimidine metabolism; dTTP biosynthesis. Its function is as follows. Catalyzes the reductive methylation of 2'-deoxyuridine-5'-monophosphate (dUMP) to 2'-deoxythymidine-5'-monophosphate (dTMP) while utilizing 5,10-methylenetetrahydrofolate (mTHF) as the methyl donor and reductant in the reaction, yielding dihydrofolate (DHF) as a by-product. This enzymatic reaction provides an intracellular de novo source of dTMP, an essential precursor for DNA biosynthesis. In Corynebacterium efficiens (strain DSM 44549 / YS-314 / AJ 12310 / JCM 11189 / NBRC 100395), this protein is Thymidylate synthase.